A 382-amino-acid chain; its full sequence is N-acetyldiaminopimelate deacetylase (382 aa).

The active site involves aspartate 73. Glutamate 132 serves as the catalytic Proton acceptor.

This sequence belongs to the peptidase M20A family. N-acetyldiaminopimelate deacetylase subfamily.

It catalyses the reaction N-acetyl-(2S,6S)-2,6-diaminopimelate + H2O = (2S,6S)-2,6-diaminopimelate + acetate. It participates in amino-acid biosynthesis; L-lysine biosynthesis via DAP pathway; LL-2,6-diaminopimelate from (S)-tetrahydrodipicolinate (acetylase route): step 3/3. Functionally, catalyzes the conversion of N-acetyl-diaminopimelate to diaminopimelate and acetate. This is N-acetyldiaminopimelate deacetylase from Oenococcus oeni (strain ATCC BAA-331 / PSU-1).